The chain runs to 386 residues: MFAEIQIQDKDRMGTAGKVIKCKAAVLWEQKQPFSIEEIEVAPPKTKEVRIKILATGICRTDDHVIKGTMVSKFPVIVGHEATGIVESIGEGVTTVKPGDKVIPLFLPQCRECNACRNPDGNLCIRSDITGRGVLADGTTRFTCKGKPVHHFMNTSTFTEYTVVDESSVAKIDDAAPPEKVCLIGCGFSTGYGAAVKTGKVKPGSTCVVFGLGGVGLSVIMGCKSAGASRIIGIDLNKDKFEKAMAVGATECISPKDSTKPISEVLSEMTGNNVGYTFEVIGHLETMIDALASCHMNYGTSVVVGVPPSAKMLTYDPMLLFTGRTWKGCVFGGLKSRDDVPKLVTEFLAKKFDLDQLITHVLPFKKISEGFELLNSGQSIRTVLTF.

Cysteine 59 provides a ligand contact to Zn(2+). An NAD(+)-binding site is contributed by 60–64 (RTDDH). Histidine 80, cysteine 110, cysteine 113, cysteine 116, cysteine 124, and cysteine 186 together coordinate Zn(2+). NAD(+) contacts are provided by residues 211-216 (GLGGVG), aspartate 235, lysine 240, 281-283 (IGH), 304-306 (VGV), 329-331 (CVF), and arginine 381.

The protein belongs to the zinc-containing alcohol dehydrogenase family. Class-IV subfamily. In terms of assembly, homodimer. Requires Zn(2+) as cofactor. As to expression, preferentially expressed in stomach.

Its subcellular location is the cytoplasm. The catalysed reaction is a primary alcohol + NAD(+) = an aldehyde + NADH + H(+). It catalyses the reaction 10-hydroxydecanoate + NAD(+) = 10-oxodecanoate + NADH + H(+). The enzyme catalyses all-trans-retinol + NAD(+) = all-trans-retinal + NADH + H(+). It carries out the reaction 9-cis-retinol + NAD(+) = 9-cis-retinal + NADH + H(+). The catalysed reaction is all-trans-3,4-didehydroretinol + NAD(+) = all-trans-3,4-didehydroretinal + NADH + H(+). It catalyses the reaction all-trans-4-hydroxyretinol + NAD(+) = all-trans-4-hydroxyretinal + NADH + H(+). The enzyme catalyses all-trans-4-oxoretinol + NAD(+) = all-trans-4-oxoretinal + NADH + H(+). It carries out the reaction 12-hydroxydodecanoate + NAD(+) = 12-oxododecanoate + NADH + H(+). The catalysed reaction is 16-hydroxyhexadecanoate + NAD(+) = 16-oxohexadecanoate + NADH + H(+). It catalyses the reaction hexan-1-ol + NAD(+) = hexanal + NADH + H(+). The enzyme catalyses (E)-hex-2-en-1-ol + NAD(+) = (E)-hex-2-enal + NADH + H(+). It carries out the reaction (E)-4-hydroxynon-2-en-1-ol + NAD(+) = (E)-4-hydroxynon-2-enal + NADH + H(+). Its activity is regulated as follows. Retinol oxidation is inhibited by the detergent Tween 80. Ethanol inhibits both all-trans-retinol and 9-cis-retinol oxidation. 13-cis-retinol is an effective competitive inhibitor of the 9-cis-retinol oxidation. All-trans-retinoic acid is a powerful inhibitor of all-trans-retinol oxidation. 13-cis-retinoic acid is a powerful inhibitor of all-trans-retinol oxidation. Cimetidine competitively inhibited ethanol oxidation. Catalyzes the NAD-dependent oxidation of all-trans-retinol, alcohol, and omega-hydroxy fatty acids and their derivatives. Oxidizes preferentially all trans-retinol, all-trans-4-hydroxyretinol, 9-cis-retinol, 2-hexenol, and long chain omega-hydroxy fatty acids such as juniperic acid. In vitro can also catalyze the NADH-dependent reduction of all-trans-retinal and aldehydes and their derivatives. Reduces preferentially all trans-retinal, all-trans-4-oxoretinal and hexanal. Catalyzes in the oxidative direction with higher efficiency. Therefore may participate in retinoid metabolism, fatty acid omega-oxidation, and elimination of cytotoxic aldehydes produced by lipid peroxidation. This is All-trans-retinol dehydrogenase [NAD(+)] ADH7 from Homo sapiens (Human).